The primary structure comprises 95 residues: Co-chaperonin GroES (95 aa).

The protein belongs to the GroES chaperonin family. As to quaternary structure, heptamer of 7 subunits arranged in a ring. Interacts with the chaperonin GroEL.

Its subcellular location is the cytoplasm. Its function is as follows. Together with the chaperonin GroEL, plays an essential role in assisting protein folding. The GroEL-GroES system forms a nano-cage that allows encapsulation of the non-native substrate proteins and provides a physical environment optimized to promote and accelerate protein folding. GroES binds to the apical surface of the GroEL ring, thereby capping the opening of the GroEL channel. This chain is Co-chaperonin GroES, found in Caldicellulosiruptor bescii (strain ATCC BAA-1888 / DSM 6725 / KCTC 15123 / Z-1320) (Anaerocellum thermophilum).